We begin with the raw amino-acid sequence, 85 residues long: Small ribosomal subunit protein bS20 (85 aa).

Belongs to the bacterial ribosomal protein bS20 family.

Its function is as follows. Binds directly to 16S ribosomal RNA. This is Small ribosomal subunit protein bS20 from Lactobacillus johnsonii (strain CNCM I-12250 / La1 / NCC 533).